Reading from the N-terminus, the 446-residue chain is Phosphoglucosamine mutase (446 aa).

Residue Ser-100 is the Phosphoserine intermediate of the active site. Ser-100, Asp-241, Asp-243, and Asp-245 together coordinate Mg(2+). Ser-100 is modified (phosphoserine).

Belongs to the phosphohexose mutase family. Mg(2+) serves as cofactor. Activated by phosphorylation.

The catalysed reaction is alpha-D-glucosamine 1-phosphate = D-glucosamine 6-phosphate. Functionally, catalyzes the conversion of glucosamine-6-phosphate to glucosamine-1-phosphate. This Methylorubrum populi (strain ATCC BAA-705 / NCIMB 13946 / BJ001) (Methylobacterium populi) protein is Phosphoglucosamine mutase.